A 369-amino-acid polypeptide reads, in one-letter code: Protein phosphatase 1 regulatory inhibitor subunit PPP1R8 homolog (369 aa).

Over residues 1–11 the composition is skewed to basic and acidic residues; the sequence is MYGRSGLDRFK. The segment at 1–26 is disordered; sequence MYGRSGLDRFKKSQTSEPFSVSANPP. A compositionally biased stretch (polar residues) spans 13 to 23; the sequence is SQTSEPFSVSA. Residues 87-138 form the FHA domain; it reads HIFGRQHQTCDFVLDHQSVSRQHAAVVPHKNGSIFVIDLGSAHGTFVANERL. Positions 345 to 369 are disordered; the sequence is VSQPAAETECGGVGEEDDNDDLFGD. Acidic residues predominate over residues 358–369; that stretch reads GEEDDNDDLFGD.

As to quaternary structure, interacts with human protein phosphatase PPP1C.

In terms of biological role, inhibitor of protein-phosphatase 1 (PP1). Binds to and inhibits PP1 activity. The chain is Protein phosphatase 1 regulatory inhibitor subunit PPP1R8 homolog from Arabidopsis thaliana (Mouse-ear cress).